Consider the following 238-residue polypeptide: MAVLIPAAGGGRRLGGRPKQFRALGEHPVLVQVLLSFERHPAVGHAVVAAPESRVTDVTDRLQAEGLSVLTAVVGGGADRQSSVQHALRAVPDPVNTVLVHDAARPFVAAAQVQAVVQAVRTGGAASLVVPVADTLRRGDADRLGETVSRDGLYRMQTPQGFRREWLEHAHRRASAEDLAATDDVALVQHLDHDVAPVPGSRRNFKITTPDDWALAQALWPTWRDAPERFDLSSSASS.

The protein belongs to the IspD/TarI cytidylyltransferase family. IspD subfamily.

It carries out the reaction 2-C-methyl-D-erythritol 4-phosphate + CTP + H(+) = 4-CDP-2-C-methyl-D-erythritol + diphosphate. Its pathway is isoprenoid biosynthesis; isopentenyl diphosphate biosynthesis via DXP pathway; isopentenyl diphosphate from 1-deoxy-D-xylulose 5-phosphate: step 2/6. Catalyzes the formation of 4-diphosphocytidyl-2-C-methyl-D-erythritol from CTP and 2-C-methyl-D-erythritol 4-phosphate (MEP). The chain is 2-C-methyl-D-erythritol 4-phosphate cytidylyltransferase from Salinibacter ruber (strain DSM 13855 / M31).